The sequence spans 566 residues: Cyclin-dependent kinase-like 2 (566 aa).

Residues 4-287 (YENLGLVGEG…CAELLHHDFF (284 aa)) enclose the Protein kinase domain. Residues 10-18 (VGEGSYGMV) and lysine 33 each bind ATP. The [NKR]KIAxRE signature appears at 45–51 (KKIAMRE). Aspartate 126 acts as the Proton acceptor in catalysis. 2 disordered regions span residues 307-334 (DARN…GEER) and 545-566 (QVSG…EHQH). Over residues 320–334 (RKKEKEKDDSLGEER) the composition is skewed to basic and acidic residues.

Belongs to the protein kinase superfamily. CMGC Ser/Thr protein kinase family. CDC2/CDKX subfamily.

Its subcellular location is the cytoplasm. It is found in the nucleus. It carries out the reaction L-seryl-[protein] + ATP = O-phospho-L-seryl-[protein] + ADP + H(+). The catalysed reaction is L-threonyl-[protein] + ATP = O-phospho-L-threonyl-[protein] + ADP + H(+). The chain is Cyclin-dependent kinase-like 2 from Oryctolagus cuniculus (Rabbit).